Here is a 318-residue protein sequence, read N- to C-terminus: NADH-ubiquinone oxidoreductase chain 1 (318 aa).

8 helical membrane passes run 2 to 22, 69 to 89, 100 to 120, 146 to 166, 171 to 191, 223 to 243, 253 to 273, and 294 to 314; these read FMINVLSLIIPILLAVAFLTL, LMFIMAPILALTLALTMWIPL, LGVLFMLAMSSLAVYSILWSG, LAIILLSVLLMNGSFTLAMLI, YMWLIIPAWPLAMMWFISTLA, FFLAEYANIIMMNILTTILFF, ELYTINFTVKTLLLTTTFLWI, and LPLTLALCMWHVSLPIITASI.

Belongs to the complex I subunit 1 family. As to quaternary structure, core subunit of respiratory chain NADH dehydrogenase (Complex I) which is composed of 45 different subunits.

Its subcellular location is the mitochondrion inner membrane. The catalysed reaction is a ubiquinone + NADH + 5 H(+)(in) = a ubiquinol + NAD(+) + 4 H(+)(out). In terms of biological role, core subunit of the mitochondrial membrane respiratory chain NADH dehydrogenase (Complex I) which catalyzes electron transfer from NADH through the respiratory chain, using ubiquinone as an electron acceptor. Essential for the catalytic activity and assembly of complex I. This chain is NADH-ubiquinone oxidoreductase chain 1 (MT-ND1), found in Felis catus (Cat).